A 248-amino-acid chain; its full sequence is Cell division protein ZapD (248 aa).

The protein belongs to the ZapD family. Interacts with FtsZ.

The protein resides in the cytoplasm. In terms of biological role, cell division factor that enhances FtsZ-ring assembly. Directly interacts with FtsZ and promotes bundling of FtsZ protofilaments, with a reduction in FtsZ GTPase activity. This Aliivibrio fischeri (strain ATCC 700601 / ES114) (Vibrio fischeri) protein is Cell division protein ZapD.